Reading from the N-terminus, the 502-residue chain is Probable cytosol aminopeptidase (502 aa).

Mn(2+)-binding residues include lysine 270 and aspartate 275. Residue lysine 282 is part of the active site. Mn(2+) is bound by residues aspartate 293, aspartate 352, and glutamate 354. Residue arginine 356 is part of the active site.

This sequence belongs to the peptidase M17 family. It depends on Mn(2+) as a cofactor.

It localises to the cytoplasm. The catalysed reaction is Release of an N-terminal amino acid, Xaa-|-Yaa-, in which Xaa is preferably Leu, but may be other amino acids including Pro although not Arg or Lys, and Yaa may be Pro. Amino acid amides and methyl esters are also readily hydrolyzed, but rates on arylamides are exceedingly low.. It catalyses the reaction Release of an N-terminal amino acid, preferentially leucine, but not glutamic or aspartic acids.. Its function is as follows. Presumably involved in the processing and regular turnover of intracellular proteins. Catalyzes the removal of unsubstituted N-terminal amino acids from various peptides. In Desulfotalea psychrophila (strain LSv54 / DSM 12343), this protein is Probable cytosol aminopeptidase.